A 392-amino-acid polypeptide reads, in one-letter code: Methylthioribose kinase (392 aa).

Residues N38, K53, and 107–109 each bind ATP; that span reads EDL. D225 contributes to the substrate binding site. 242-244 contacts ATP; sequence DPE. R332 contacts substrate.

The protein belongs to the methylthioribose kinase family. In terms of assembly, homodimer.

It carries out the reaction 5-(methylsulfanyl)-D-ribose + ATP = 5-(methylsulfanyl)-alpha-D-ribose 1-phosphate + ADP + H(+). Its pathway is amino-acid biosynthesis; L-methionine biosynthesis via salvage pathway; S-methyl-5-thio-alpha-D-ribose 1-phosphate from S-methyl-5'-thioadenosine (hydrolase route): step 2/2. Catalyzes the phosphorylation of methylthioribose into methylthioribose-1-phosphate. This is Methylthioribose kinase from Bacillus mycoides (strain KBAB4) (Bacillus weihenstephanensis).